The chain runs to 209 residues: Imidazole glycerol phosphate synthase subunit HisH (209 aa).

Residues 3-209 (KIGLIDYGMG…WINWLKKNKF (207 aa)) enclose the Glutamine amidotransferase type-1 domain. The active-site Nucleophile is Cys81. Catalysis depends on residues His185 and Glu187.

As to quaternary structure, heterodimer of HisH and HisF.

Its subcellular location is the cytoplasm. The catalysed reaction is 5-[(5-phospho-1-deoxy-D-ribulos-1-ylimino)methylamino]-1-(5-phospho-beta-D-ribosyl)imidazole-4-carboxamide + L-glutamine = D-erythro-1-(imidazol-4-yl)glycerol 3-phosphate + 5-amino-1-(5-phospho-beta-D-ribosyl)imidazole-4-carboxamide + L-glutamate + H(+). It catalyses the reaction L-glutamine + H2O = L-glutamate + NH4(+). The protein operates within amino-acid biosynthesis; L-histidine biosynthesis; L-histidine from 5-phospho-alpha-D-ribose 1-diphosphate: step 5/9. In terms of biological role, IGPS catalyzes the conversion of PRFAR and glutamine to IGP, AICAR and glutamate. The HisH subunit catalyzes the hydrolysis of glutamine to glutamate and ammonia as part of the synthesis of IGP and AICAR. The resulting ammonia molecule is channeled to the active site of HisF. The chain is Imidazole glycerol phosphate synthase subunit HisH from Prochlorococcus marinus (strain NATL2A).